The primary structure comprises 243 residues: Dirigent protein 16 (243 aa).

Positions 1–24 are cleaved as a signal peptide; that stretch reads MMIKQSPFLLLTTILFTVAVFVAA.

Belongs to the plant dirigent protein family. Homodimer.

Its subcellular location is the secreted. The protein localises to the extracellular space. It is found in the apoplast. Its function is as follows. Dirigent proteins impart stereoselectivity on the phenoxy radical-coupling reaction, yielding optically active lignans from two molecules of coniferyl alcohol in the biosynthesis of lignans, flavonolignans, and alkaloids and thus plays a central role in plant secondary metabolism. This Arabidopsis thaliana (Mouse-ear cress) protein is Dirigent protein 16 (DIR16).